The sequence spans 131 residues: Small ribosomal subunit protein uS8 (131 aa).

Belongs to the universal ribosomal protein uS8 family. In terms of assembly, part of the 30S ribosomal subunit. Contacts proteins S5 and S12.

Functionally, one of the primary rRNA binding proteins, it binds directly to 16S rRNA central domain where it helps coordinate assembly of the platform of the 30S subunit. The chain is Small ribosomal subunit protein uS8 from Vesicomyosocius okutanii subsp. Calyptogena okutanii (strain HA).